The chain runs to 266 residues: Ras-like protein family member 12 (266 aa).

Residues 27–34, 74–78, and 134–137 each bind GTP; these read GRRGAGKS, DTADL, and NKLD.

This sequence belongs to the small GTPase superfamily. Ras family.

It carries out the reaction GTP + H2O = GDP + phosphate + H(+). The protein is Ras-like protein family member 12 (RASL12) of Bos taurus (Bovine).